The following is a 315-amino-acid chain: Transaldolase (315 aa).

The Schiff-base intermediate with substrate role is filled by Lys128.

Belongs to the transaldolase family. Type 1 subfamily. In terms of assembly, homodimer.

The protein localises to the cytoplasm. The catalysed reaction is D-sedoheptulose 7-phosphate + D-glyceraldehyde 3-phosphate = D-erythrose 4-phosphate + beta-D-fructose 6-phosphate. The protein operates within carbohydrate degradation; pentose phosphate pathway; D-glyceraldehyde 3-phosphate and beta-D-fructose 6-phosphate from D-ribose 5-phosphate and D-xylulose 5-phosphate (non-oxidative stage): step 2/3. Functionally, transaldolase is important for the balance of metabolites in the pentose-phosphate pathway. In Opitutus terrae (strain DSM 11246 / JCM 15787 / PB90-1), this protein is Transaldolase.